Reading from the N-terminus, the 337-residue chain is Large ribosomal subunit protein uL3 (337 aa).

The interval 1 to 20 (MASIHRPKRGSLAFSPRKRA) is disordered.

It belongs to the universal ribosomal protein uL3 family. As to quaternary structure, part of the 50S ribosomal subunit. Forms a cluster with proteins L14 and L24e.

Its function is as follows. One of the primary rRNA binding proteins, it binds directly near the 3'-end of the 23S rRNA, where it nucleates assembly of the 50S subunit. The protein is Large ribosomal subunit protein uL3 of Methanosarcina mazei (strain ATCC BAA-159 / DSM 3647 / Goe1 / Go1 / JCM 11833 / OCM 88) (Methanosarcina frisia).